Consider the following 509-residue polypeptide: ATP synthase subunit alpha (509 aa).

Glycine 171–threonine 178 is an ATP binding site.

It belongs to the ATPase alpha/beta chains family. F-type ATPases have 2 components, CF(1) - the catalytic core - and CF(0) - the membrane proton channel. CF(1) has five subunits: alpha(3), beta(3), gamma(1), delta(1), epsilon(1). CF(0) has three main subunits: a(1), b(2) and c(9-12). The alpha and beta chains form an alternating ring which encloses part of the gamma chain. CF(1) is attached to CF(0) by a central stalk formed by the gamma and epsilon chains, while a peripheral stalk is formed by the delta and b chains.

It localises to the cell inner membrane. The catalysed reaction is ATP + H2O + 4 H(+)(in) = ADP + phosphate + 5 H(+)(out). Produces ATP from ADP in the presence of a proton gradient across the membrane. The alpha chain is a regulatory subunit. In Ehrlichia chaffeensis (strain ATCC CRL-10679 / Arkansas), this protein is ATP synthase subunit alpha.